Consider the following 286-residue polypeptide: Transcription factor bHLH137 (286 aa).

Polar residues predominate over residues 63–84 (SGSEKLANTTKTATTGSSSCDQ). Residues 63 to 149 (SGSEKLANTT…RGQATDSHSL (87 aa)) are disordered. The bHLH domain maps to 142–192 (QATDSHSLAERVRREKISERMRTLQNLVPGCDKVTGKALMLDEIINYVQTL).

Homodimer.

The protein resides in the nucleus. In Arabidopsis thaliana (Mouse-ear cress), this protein is Transcription factor bHLH137 (BHLH137).